The following is a 1235-amino-acid chain: ATP-dependent helicase/nuclease subunit A (1235 aa).

Positions 12-482 (ALWTDDQWKA…IDLSQNFRSR (471 aa)) constitute a UvrD-like helicase ATP-binding domain. 33-40 (AAAGSGKT) serves as a coordination point for ATP. A UvrD-like helicase C-terminal domain is found at 509–800 (AAELTLGASF…RMMTIHASKG (292 aa)).

The protein belongs to the helicase family. AddA subfamily. As to quaternary structure, heterodimer of AddA and AddB/RexB. Mg(2+) is required as a cofactor.

The enzyme catalyses Couples ATP hydrolysis with the unwinding of duplex DNA by translocating in the 3'-5' direction.. It catalyses the reaction ATP + H2O = ADP + phosphate + H(+). In terms of biological role, the heterodimer acts as both an ATP-dependent DNA helicase and an ATP-dependent, dual-direction single-stranded exonuclease. Recognizes the chi site generating a DNA molecule suitable for the initiation of homologous recombination. The AddA nuclease domain is required for chi fragment generation; this subunit has the helicase and 3' -&gt; 5' nuclease activities. This is ATP-dependent helicase/nuclease subunit A from Listeria innocua serovar 6a (strain ATCC BAA-680 / CLIP 11262).